The sequence spans 88 residues: MALKERIGTVVSDKMDKTVVVAVINRYPHPTYKKIVSRTTRYKAHDPENTCALGDRVKIRETRPLSAHKRWAIQEILNKTSQTKEVKK.

It belongs to the universal ribosomal protein uS17 family. As to quaternary structure, part of the 30S ribosomal subunit.

One of the primary rRNA binding proteins, it binds specifically to the 5'-end of 16S ribosomal RNA. The protein is Small ribosomal subunit protein uS17 of Prochlorococcus marinus (strain MIT 9312).